Consider the following 152-residue polypeptide: Large ribosomal subunit protein bL9 (152 aa).

It belongs to the bacterial ribosomal protein bL9 family.

Binds to the 23S rRNA. In Mycoplasmopsis synoviae (strain 53) (Mycoplasma synoviae), this protein is Large ribosomal subunit protein bL9.